The chain runs to 270 residues: Protein N-terminal and lysine N-methyltransferase EFM7 (270 aa).

Residues 1-45 form a disordered region; the sequence is MSDIESLNGGDLFAEPSDFYKPPPEPHFATYTRDDVPESSTSQQK. S-adenosyl-L-methionine is bound by residues Trp63, 89-91, Asp111, Trp158, and Ser182; that span reads GAA.

This sequence belongs to the class I-like SAM-binding methyltransferase superfamily. EFM7 family.

It is found in the cytoplasm. In terms of biological role, S-adenosyl-L-methionine-dependent protein methyltransferase that trimethylates the N-terminal glycine 'Gly-2' of elongation factor 1-alpha, before also catalyzing the mono- and dimethylation of 'Lys-3'. The sequence is that of Protein N-terminal and lysine N-methyltransferase EFM7 from Kluyveromyces lactis (strain ATCC 8585 / CBS 2359 / DSM 70799 / NBRC 1267 / NRRL Y-1140 / WM37) (Yeast).